The sequence spans 109 residues: Nucleoid-associated protein AHA_2212 (109 aa).

2 disordered regions span residues M1–K23 and N88–F109. Over residues M11 to K23 the composition is skewed to low complexity.

This sequence belongs to the YbaB/EbfC family. Homodimer.

The protein resides in the cytoplasm. It localises to the nucleoid. Functionally, binds to DNA and alters its conformation. May be involved in regulation of gene expression, nucleoid organization and DNA protection. This is Nucleoid-associated protein AHA_2212 from Aeromonas hydrophila subsp. hydrophila (strain ATCC 7966 / DSM 30187 / BCRC 13018 / CCUG 14551 / JCM 1027 / KCTC 2358 / NCIMB 9240 / NCTC 8049).